We begin with the raw amino-acid sequence, 290 residues long: 4-hydroxy-tetrahydrodipicolinate synthase (290 aa).

T44 is a pyruvate binding site. Y132 serves as the catalytic Proton donor/acceptor. Residue K160 is the Schiff-base intermediate with substrate of the active site. I202 is a binding site for pyruvate.

This sequence belongs to the DapA family. In terms of assembly, homotetramer; dimer of dimers.

It localises to the cytoplasm. It catalyses the reaction L-aspartate 4-semialdehyde + pyruvate = (2S,4S)-4-hydroxy-2,3,4,5-tetrahydrodipicolinate + H2O + H(+). The protein operates within amino-acid biosynthesis; L-lysine biosynthesis via DAP pathway; (S)-tetrahydrodipicolinate from L-aspartate: step 3/4. Catalyzes the condensation of (S)-aspartate-beta-semialdehyde [(S)-ASA] and pyruvate to 4-hydroxy-tetrahydrodipicolinate (HTPA). The sequence is that of 4-hydroxy-tetrahydrodipicolinate synthase from Geotalea daltonii (strain DSM 22248 / JCM 15807 / FRC-32) (Geobacter daltonii).